Consider the following 537-residue polypeptide: Probable protein kinase UbiB (537 aa).

Residues 24-44 form a helical membrane-spanning segment; sequence LLFEQPLLPWWLASLRLLMPW. Residues 126-494 form the Protein kinase domain; it reads RFDVEPLASA…RRRQGDNWAL (369 aa). ATP-binding positions include 132–140 and Lys154; that span reads LASASVAQV. The active-site Proton acceptor is the Asp289. 2 helical membrane passes run 493–513 and 515–535; these read ALRL…AGAV and LSAP…YLIV.

Belongs to the ABC1 family. UbiB subfamily.

Its subcellular location is the cell inner membrane. The protein operates within cofactor biosynthesis; ubiquinone biosynthesis [regulation]. In terms of biological role, is probably a protein kinase regulator of UbiI activity which is involved in aerobic coenzyme Q (ubiquinone) biosynthesis. This Pseudomonas entomophila (strain L48) protein is Probable protein kinase UbiB.